The chain runs to 122 residues: Small ribosomal subunit protein bS6 (122 aa).

The disordered stretch occupies residues 95–122; it reads AETAPSPMMKEVQREEAKKAAAQSEQAA.

It belongs to the bacterial ribosomal protein bS6 family.

In terms of biological role, binds together with bS18 to 16S ribosomal RNA. The protein is Small ribosomal subunit protein bS6 of Ralstonia nicotianae (strain ATCC BAA-1114 / GMI1000) (Ralstonia solanacearum).